The chain runs to 311 residues: Coproporphyrin III ferrochelatase 1 (311 aa).

Fe-coproporphyrin III contacts are provided by residues Tyr-12, Arg-29, 45-46 (RY), Ser-53, and Tyr-124. Positions 182 and 263 each coordinate Fe(2+).

Belongs to the ferrochelatase family.

It localises to the cytoplasm. It carries out the reaction Fe-coproporphyrin III + 2 H(+) = coproporphyrin III + Fe(2+). It functions in the pathway porphyrin-containing compound metabolism; protoheme biosynthesis. In terms of biological role, involved in coproporphyrin-dependent heme b biosynthesis. Catalyzes the insertion of ferrous iron into coproporphyrin III to form Fe-coproporphyrin III. This Bacillus cereus (strain ZK / E33L) protein is Coproporphyrin III ferrochelatase 1.